Here is a 391-residue protein sequence, read N- to C-terminus: MSLQPRDVVIVDYARTPMGRSKNGCYRNVRADDLSADLITGLLARNAALDPAQIDDMIWGCVMQRGEQGFNVARNILLRAGLPHTVPAQTVNRLCGSSMSALHTAAANIMAGLGDVYLVGGVEHMGHIDMNQHVDPNPALGHSVAQAAGSMGLTAEYLSLLHGITREAMDEFGARSHRKAAEATEQGKFAREIIARIGHDETGAPTLIKHDETIRPDTTVEALSKLKPAFNPKGGTVTAGTSSQITDGASSMLVMSAAKAAELGLTPIAKIRSMALAGVDPSIMGYGPVPATQKALANAGLSIEDIDVVELNEAFAAQALPVLKDLNLLDAMEDKVNLYGGAIALGHPFGCSGTRITGTLLSVMQDKDATLGVSTMCIGLGQGITTIVERV.

The Acyl-thioester intermediate role is filled by Cys-95. Active-site proton acceptor residues include His-347 and Cys-377.

The protein belongs to the thiolase-like superfamily. Thiolase family. Heterotetramer of two alpha chains (FadB) and two beta chains (FadA).

It localises to the cytoplasm. It carries out the reaction an acyl-CoA + acetyl-CoA = a 3-oxoacyl-CoA + CoA. It functions in the pathway lipid metabolism; fatty acid beta-oxidation. Functionally, catalyzes the final step of fatty acid oxidation in which acetyl-CoA is released and the CoA ester of a fatty acid two carbons shorter is formed. The protein is 3-ketoacyl-CoA thiolase of Saccharophagus degradans (strain 2-40 / ATCC 43961 / DSM 17024).